Here is a 202-residue protein sequence, read N- to C-terminus: Small ribosomal subunit protein uS4c (202 aa).

Residues 90–153 (MRLDNIIFRL…KSQAIISKNL (64 aa)) enclose the S4 RNA-binding domain.

It belongs to the universal ribosomal protein uS4 family. In terms of assembly, part of the 30S ribosomal subunit. Contacts protein S5. The interaction surface between S4 and S5 is involved in control of translational fidelity.

The protein localises to the plastid. It localises to the chloroplast. Functionally, one of the primary rRNA binding proteins, it binds directly to 16S rRNA where it nucleates assembly of the body of the 30S subunit. In terms of biological role, with S5 and S12 plays an important role in translational accuracy. This Rosulabryum capillare (Capillary thread-moss) protein is Small ribosomal subunit protein uS4c (rps4).